Consider the following 68-residue polypeptide: Small ribosomal subunit protein bS21 (68 aa).

Positions 35-68 (HYEKPSEKRARERAAAVRRARKMERKRMERDGIK) are disordered. The segment covering 37-49 (EKPSEKRARERAA) has biased composition (basic and acidic residues). A compositionally biased stretch (basic residues) spans 50-59 (AVRRARKMER).

This sequence belongs to the bacterial ribosomal protein bS21 family.

This is Small ribosomal subunit protein bS21 from Sphingopyxis alaskensis (strain DSM 13593 / LMG 18877 / RB2256) (Sphingomonas alaskensis).